The chain runs to 300 residues: Iron-dependent extradiol dioxygenase (300 aa).

VOC domains follow at residues 5–120 (SLGY…VFHG) and 142–270 (GMGH…FGCE). A Fe cation-binding site is contributed by His145. Positions 200, 215, 250, and 256 each coordinate substrate. His215 serves as a coordination point for Fe cation. Position 266 (Glu266) interacts with Fe cation.

This sequence belongs to the extradiol ring-cleavage dioxygenase family. As to quaternary structure, homodimer, but may form a homooctamer. It depends on Fe(2+) as a cofactor.

It catalyses the reaction 3,4-dihydroxy-9,10-secoandrosta-1,3,5(10)-triene-9,17-dione + O2 = (1E,2Z)-3-hydroxy-5,9,17-trioxo-4,5:9,10-disecoandrosta-1(10),2-dien-4-oate + H(+). Its pathway is steroid metabolism; cholesterol metabolism. Functionally, catalyzes the meta-cleavage of 3,4-dihydroxy-9,10-seconandrost-1,3,5(10)-triene-9,17-dione (3,4-DHSA) to produce 4,5-9,10-diseco-3-hydroxy-5,9,17-trioxoandrosta-1(10),2-diene-4-oic acid (4,9-DSHA). The protein is Iron-dependent extradiol dioxygenase (hsaC) of Mycobacterium tuberculosis (strain CDC 1551 / Oshkosh).